The sequence spans 240 residues: RNA transcription, translation and transport factor protein (240 aa).

The protein belongs to the RTRAF family. As to quaternary structure, homodimer. Component of a tRNA-splicing ligase complex.

Its subcellular location is the nucleus. The protein resides in the cytoplasm. It is found in the cytosol. The protein localises to the perinuclear region. It localises to the cytoskeleton. Its subcellular location is the microtubule organizing center. The protein resides in the centrosome. Functionally, RNA-binding protein involved in modulation of mRNA transcription by Polymerase II. Component of the tRNA-splicing ligase complex. The polypeptide is RNA transcription, translation and transport factor protein (Xenopus laevis (African clawed frog)).